The sequence spans 118 residues: Holo-[acyl-carrier-protein] synthase (118 aa).

Asp-8 and Glu-58 together coordinate Mg(2+).

This sequence belongs to the P-Pant transferase superfamily. AcpS family. The cofactor is Mg(2+).

The protein localises to the cytoplasm. It catalyses the reaction apo-[ACP] + CoA = holo-[ACP] + adenosine 3',5'-bisphosphate + H(+). Transfers the 4'-phosphopantetheine moiety from coenzyme A to a Ser of acyl-carrier-protein. This Streptococcus pyogenes serotype M28 (strain MGAS6180) protein is Holo-[acyl-carrier-protein] synthase.